Reading from the N-terminus, the 184-residue chain is Ribosome-recycling factor (184 aa).

The protein belongs to the RRF family.

The protein resides in the cytoplasm. Functionally, responsible for the release of ribosomes from messenger RNA at the termination of protein biosynthesis. May increase the efficiency of translation by recycling ribosomes from one round of translation to another. The protein is Ribosome-recycling factor of Stenotrophomonas maltophilia (strain R551-3).